The primary structure comprises 281 residues: ATP phosphoribosyltransferase (281 aa).

It belongs to the ATP phosphoribosyltransferase family. Long subfamily. In terms of assembly, equilibrium between an active dimeric form, an inactive hexameric form and higher aggregates. Interconversion between the various forms is largely reversible and is influenced by the natural substrates and inhibitors of the enzyme. Requires Mg(2+) as cofactor.

It is found in the cytoplasm. The catalysed reaction is 1-(5-phospho-beta-D-ribosyl)-ATP + diphosphate = 5-phospho-alpha-D-ribose 1-diphosphate + ATP. It participates in amino-acid biosynthesis; L-histidine biosynthesis; L-histidine from 5-phospho-alpha-D-ribose 1-diphosphate: step 1/9. Its activity is regulated as follows. Feedback inhibited by histidine. In terms of biological role, catalyzes the condensation of ATP and 5-phosphoribose 1-diphosphate to form N'-(5'-phosphoribosyl)-ATP (PR-ATP). Has a crucial role in the pathway because the rate of histidine biosynthesis seems to be controlled primarily by regulation of HisG enzymatic activity. The protein is ATP phosphoribosyltransferase of Mycolicibacterium gilvum (strain PYR-GCK) (Mycobacterium gilvum (strain PYR-GCK)).